Here is a 576-residue protein sequence, read N- to C-terminus: Arginine--tRNA ligase (576 aa).

Residues 122 to 132 (PNVAKQMHVGH) carry the 'HIGH' region motif.

It belongs to the class-I aminoacyl-tRNA synthetase family. In terms of assembly, monomer.

It localises to the cytoplasm. The enzyme catalyses tRNA(Arg) + L-arginine + ATP = L-arginyl-tRNA(Arg) + AMP + diphosphate. In Yersinia pseudotuberculosis serotype O:1b (strain IP 31758), this protein is Arginine--tRNA ligase.